Reading from the N-terminus, the 425-residue chain is Tyrosine--tRNA ligase (425 aa).

Tyr-34 is an L-tyrosine binding site. A 'HIGH' region motif is present at residues Pro-39 to Asn-48. Residues Tyr-171 and Gln-175 each contribute to the L-tyrosine site. Residues Lys-231 to Ser-235 carry the 'KMSKS' region motif. Position 234 (Lys-234) interacts with ATP. The 67-residue stretch at Ala-358–Ile-424 folds into the S4 RNA-binding domain.

Belongs to the class-I aminoacyl-tRNA synthetase family. TyrS type 1 subfamily. In terms of assembly, homodimer.

The protein localises to the cytoplasm. It catalyses the reaction tRNA(Tyr) + L-tyrosine + ATP = L-tyrosyl-tRNA(Tyr) + AMP + diphosphate + H(+). Catalyzes the attachment of tyrosine to tRNA(Tyr) in a two-step reaction: tyrosine is first activated by ATP to form Tyr-AMP and then transferred to the acceptor end of tRNA(Tyr). The polypeptide is Tyrosine--tRNA ligase (Opitutus terrae (strain DSM 11246 / JCM 15787 / PB90-1)).